Here is a 354-residue protein sequence, read N- to C-terminus: Divinyl chlorophyll a/b light-harvesting protein PcbG (354 aa).

The next 6 membrane-spanning stretches (helical) occupy residues 27 to 47 (FIAA…ASTL), 65 to 85 (IFLA…VWTG), 88 to 108 (VASV…GALS), 201 to 221 (VLGG…FHIA), 241 to 261 (AVLS…AFWC), and 308 to 328 (LTNV…WHAI).

It belongs to the PsbB/PsbC family. IsiA/Pcb subfamily. The antenna complex consists of divinyl chlorophylls (a and b) and divinyl chlorophyll a/b binding proteins and binds more divinyl chlorophyll b than does the antenna complex from high-light-adapted Prochlorococcus. It depends on divinyl chlorophyll a as a cofactor. Divinyl chlorophyll b is required as a cofactor.

The protein localises to the cellular thylakoid membrane. The antenna complex functions as a light receptor, it captures and delivers excitation energy to photosystems II and I. The Prochlorales pcb genes are not related to higher plant LHCs. This is Divinyl chlorophyll a/b light-harvesting protein PcbG (pcbG) from Prochlorococcus marinus (strain NATL2A).